The sequence spans 388 residues: L-lactate dehydrogenase (388 aa).

The 380-residue stretch at 1 to 380 folds into the FMN hydroxy acid dehydrogenase domain; the sequence is MIISAASDYR…SADALSRVTR (380 aa). A substrate-binding site is contributed by Tyr-24. FMN contacts are provided by Ser-106 and Gln-127. Substrate is bound at residue Tyr-129. Thr-155 contributes to the FMN binding site. Arg-164 is a binding site for substrate. Lys-251 serves as a coordination point for FMN. The active-site Proton acceptor is His-275. Arg-278 provides a ligand contact to substrate. 306-330 contacts FMN; the sequence is DSGIRSGLDVVRMLALGADAVLLGR.

This sequence belongs to the FMN-dependent alpha-hydroxy acid dehydrogenase family. The cofactor is FMN.

Its subcellular location is the cell inner membrane. It carries out the reaction (S)-lactate + A = pyruvate + AH2. Catalyzes the conversion of L-lactate to pyruvate. Is coupled to the respiratory chain. The chain is L-lactate dehydrogenase from Xanthomonas euvesicatoria pv. vesicatoria (strain 85-10) (Xanthomonas campestris pv. vesicatoria).